Reading from the N-terminus, the 526-residue chain is Na(+)/H(+) antiporter NhaB (526 aa).

Transmembrane regions (helical) follow at residues 25–45 (ILLF…AAGW), 52–72 (IFTL…LLAI), 89–109 (LVAN…IYFM), 130–164 (LSLA…FYAI), 204–224 (LMMH…VGEP), 242–262 (IRMA…CILV), 305–325 (AVIA…VGLI), 350–370 (QEAL…AVII), 391–411 (LALF…VFVG), 448–468 (VATP…LAPL), 479–499 (MALP…ELLL), and 505–525 (WFYQ…LPAL).

Belongs to the NhaB Na(+)/H(+) (TC 2.A.34) antiporter family.

It is found in the cell inner membrane. It carries out the reaction 2 Na(+)(in) + 3 H(+)(out) = 2 Na(+)(out) + 3 H(+)(in). Its function is as follows. Na(+)/H(+) antiporter that extrudes sodium in exchange for external protons. The protein is Na(+)/H(+) antiporter NhaB of Aeromonas salmonicida (strain A449).